We begin with the raw amino-acid sequence, 131 residues long: Small ribosomal subunit protein uS10m (131 aa).

Belongs to the universal ribosomal protein uS10 family.

The protein resides in the mitochondrion. The sequence is that of Small ribosomal subunit protein uS10m (mrps10) from Dictyostelium discoideum (Social amoeba).